The following is a 391-amino-acid chain: Elongation factor Tu (391 aa).

The region spanning 10 to 201 (KPHVNIGTVG…AVDEYIPTPE (192 aa)) is the tr-type G domain. Residues 19-26 (GHVDHGKT) are G1. Residue 19–26 (GHVDHGKT) coordinates GTP. Thr26 provides a ligand contact to Mg(2+). The interval 55 to 59 (GITIS) is G2. Positions 76–79 (DCPG) are G3. Residues 76–80 (DCPGH) and 131–134 (NKVD) each bind GTP. Residues 131-134 (NKVD) form a G4 region. The tract at residues 169–171 (SAL) is G5.

This sequence belongs to the TRAFAC class translation factor GTPase superfamily. Classic translation factor GTPase family. EF-Tu/EF-1A subfamily. In terms of assembly, monomer.

The protein resides in the cytoplasm. The catalysed reaction is GTP + H2O = GDP + phosphate + H(+). In terms of biological role, GTP hydrolase that promotes the GTP-dependent binding of aminoacyl-tRNA to the A-site of ribosomes during protein biosynthesis. The chain is Elongation factor Tu from Ruegeria sp. (strain TM1040) (Silicibacter sp.).